Here is a 1390-residue protein sequence, read N- to C-terminus: MSQKSNFFQKRYSPTATRRYYGKIETNFIQPNLADIQIKSYQKFLDHDLEKLIASYFPIKSPNDRYTINFRGLHRTEPERDEAQSRAQSKTYEVGIYADLELVDNDKGTVKKARKSKKNIASNTNGVFLASMPLITHDGVFIINGIEKFVISQITRSPGIYMLTKSQLKLSNSRKRVQEGYVCEVLPANGSVMLIYISNKKKIEDAFVQILLRDAVREGAKIFPITTLLKAFGLNNREILKIFKNNEFIKRSLEAEIYNAKDFLSNVDPEIKNLLKEFRDGKTDLRRKGIASDQKLRSLVNEYVTLEKQYNALKQTSPNDSSLTALELEMENKMDSVITERAAKHIVNELSISLRDIENTEECHEVSFHALLCARFFRNKRYNLSNAGRYKVSRKLRLTERIYQKTLACDLFLKDGKLLLKKGTLLLKEEIDKIKQAAKNNEISFVNKMQLTTDGKAVDLAKESLFYETIDVYITNDNLSVSVPVIGIHNENDLNKAMTLSDFIASISYVINLPYGIGKYDDIDHLGNKRVKLINELITAKLESGFTRMERFLKEKLTIADGVNRGQQINEEGQVIEQGEKKELTIKSLINSKPIQIVIKDFFNTHQLTQFLDHQNPLSELSNKRRISAMGPGGISREDPNLDIRDVHYSQYGRICPIETPEGMNIGLIMSLASFAKIDENGFLMAPYRKIKAGVITDEVEYLTALREDEHIIAEISSLVNISNDNKILDKEIIGRYRSMQGLYDPLKIDYIDVAPHQVVSIGSSLIPFLENDDSARALMGTNMQRQAYPLIKPYAPAVGTGQEHKIASDSGLTMSSPCSGVVSYVDNSKIIITSDSSKKETVNLVKFERSNQNTCYNHKPIVEIGQRVNKDEIIVDGPAVNKSELALGQNVLVAFTTWNGYNYEDAIVISERLVKEDILTSLTINEYVAQCLSTKNGDEQITRDIPNVSDANKRYLDENGIIMVGAEVKEGDVLVGKVSPKGQVEVSPEEKLFKAIFPESVQNVRDSSLKVSHGGDGIVSAVKRFSIANGDELNDGVIEMIKVYVVQKRKIQIGDKLAGRHGNKGVISKVVPIEDMPHLEDGTPVDILLNPLGVPSRMNIGQIFETHLGYAAHKLAVRSLISSCFDQNKAKEFAIEINQPQARVERLIKGLKNQINDRNIKSEKEALEKLDNSDISLVLKEIGMSFDDLIYKIATPIFQGVNFLDLQDVMQEAGLDPQKNQGKFKLIDGRSGMPFERPISLGIMYMMKLNHMVDDKIHARAVGPYSKITQQPLGGKSQNGGQRFGEMEVWALEAYGAAYNLQELLTIKSDDVQGRNRAYAAIVKGAAFPEPGIPESFKLLTKELQGLALSVSFIYDDNTQQDSNNVSILQSDGEQDEFFNDFEFDTEGY.

The protein belongs to the RNA polymerase beta chain family. As to quaternary structure, the RNAP catalytic core consists of 2 alpha, 1 beta, 1 beta' and 1 omega subunit. When a sigma factor is associated with the core the holoenzyme is formed, which can initiate transcription.

The catalysed reaction is RNA(n) + a ribonucleoside 5'-triphosphate = RNA(n+1) + diphosphate. DNA-dependent RNA polymerase catalyzes the transcription of DNA into RNA using the four ribonucleoside triphosphates as substrates. The protein is DNA-directed RNA polymerase subunit beta of Mycoplasma genitalium (strain ATCC 33530 / DSM 19775 / NCTC 10195 / G37) (Mycoplasmoides genitalium).